The sequence spans 870 residues: Leucine--tRNA ligase (870 aa).

The 'HIGH' region motif lies at 36-46 (PYPSGKIHLGH). A 'KMSKS' region motif is present at residues 602–606 (KMSKS). Lys605 provides a ligand contact to ATP.

It belongs to the class-I aminoacyl-tRNA synthetase family.

The protein localises to the cytoplasm. It catalyses the reaction tRNA(Leu) + L-leucine + ATP = L-leucyl-tRNA(Leu) + AMP + diphosphate. The sequence is that of Leucine--tRNA ligase from Rickettsia akari (strain Hartford).